The sequence spans 513 residues: Interferon alpha/beta receptor 2 (513 aa).

A signal peptide spans 1–21; the sequence is MRSRCTVSAVGLLSLCLVVSA. Over 22-242 the chain is Extracellular; it reads SLETITPSAF…GQESGLSESA (221 aa). 2 cysteine pairs are disulfide-bonded: Cys39/Cys123 and Cys85/Cys93. Asn42, Asn58, Asn65, Asn78, and Asn84 each carry an N-linked (GlcNAc...) asparagine glycan. N-linked (GlcNAc...) asparagine glycans are attached at residues Asn149, Asn191, and Asn195. A disulfide bond links Cys210 and Cys227. Residues 243-263 traverse the membrane as a helical segment; that stretch reads IVGITTSCLVVMVFVSTIVML. The Cytoplasmic portion of the chain corresponds to 264 to 513; sequence KRIGYICLKD…ADVGDGYIMR (250 aa). The interval 334–402 is disordered; that stretch reads GYTMHGLTGK…DPTGPYERRK (69 aa). Position 335 is a phosphotyrosine (Tyr335). Over residues 344-354 the composition is skewed to polar residues; it reads PLQQTSDTSAS. The span at 377–389 shows a compositional bias: low complexity; that stretch reads GAEPELPTEAGAG. The residue at position 403 (Ser403) is a Phosphoserine. Residues 421-444 are mediates interaction with STAT2 (and required for the recruitment of USP18); it reads GDNIIFNVNLNSVFLRVLHDEDAS. Residues Ser448 and Ser465 each carry the phosphoserine modification. A disordered region spans residues 458–513; it reads EGPQRTESDLRIAGGDRTQPPLPSLPSQDLWTEDGSSEKSDTSDSDADVGDGYIMR. Tyr510 carries the phosphotyrosine modification.

The protein belongs to the type II cytokine receptor family. In terms of assembly, heterodimer with IFNAR1; forming the receptor for type I interferon. Interacts with the transcriptional factors STAT1 and STAT2. Interacts with JAK1. Interacts with USP18; indirectly via STAT2, it negatively regulates the assembly of the ternary interferon-IFNAR1-IFNAR2 complex and therefore type I interferon signaling. Phosphorylated on tyrosine residues upon interferon binding. Phosphorylation at Tyr-335 or Tyr-510 are sufficient to mediate interferon dependent activation of STAT1, STAT2 and STAT3 leading to antiproliferative effects on many different cell types. In terms of tissue distribution, widely expressed. Detected in liver, testis, kidney, salivary gland, thymus, brain, lung and placenta. Isoform 1, isoform 2 and isoform 3 are expressed in brain.

The protein resides in the cell membrane. It localises to the secreted. In terms of biological role, together with IFNAR1, forms the heterodimeric receptor for type I interferons (including interferons alpha, beta, epsilon, omega and kappa). Type I interferon binding activates the JAK-STAT signaling cascade, resulting in transcriptional activation or repression of interferon-regulated genes that encode the effectors of the interferon response. Mechanistically, type I interferon-binding brings the IFNAR1 and IFNAR2 subunits into close proximity with one another, driving their associated Janus kinases (JAKs) (TYK2 bound to IFNAR1 and JAK1 bound to IFNAR2) to cross-phosphorylate one another. The activated kinases phosphorylate specific tyrosine residues on the intracellular domains of IFNAR1 and IFNAR2, forming docking sites for the STAT transcription factors (STAT1, STAT2 and STAT). STAT proteins are then phosphorylated by the JAKs, promoting their translocation into the nucleus to regulate expression of interferon-regulated genes. Functionally, may be potent inhibitors of type I IFN receptor activity. This Mus musculus (Mouse) protein is Interferon alpha/beta receptor 2 (Ifnar2).